The following is a 229-amino-acid chain: Ribonuclease HII (229 aa).

Positions 34 to 225 (GPVAGVDEAG…VKAAHDQWLQ (192 aa)) constitute an RNase H type-2 domain. Residues Asp40, Glu41, and Asp134 each coordinate a divalent metal cation.

The protein belongs to the RNase HII family. It depends on Mn(2+) as a cofactor. Requires Mg(2+) as cofactor.

It is found in the cytoplasm. It carries out the reaction Endonucleolytic cleavage to 5'-phosphomonoester.. Endonuclease that specifically degrades the RNA of RNA-DNA hybrids. This Corynebacterium diphtheriae (strain ATCC 700971 / NCTC 13129 / Biotype gravis) protein is Ribonuclease HII.